A 55-amino-acid chain; its full sequence is Neurotoxin X-29S (55 aa).

Positions 1 to 23 (MKIFFAVLVILVLFSMLIWTAYG) are cleaved as a signal peptide. 3 cysteine pairs are disulfide-bonded: C30-C45, C36-C50, and C39-C53.

As to expression, expressed by the venom gland.

It localises to the secreted. The sequence is that of Neurotoxin X-29S from Olivierus martensii (Manchurian scorpion).